The chain runs to 416 residues: Putative competence-damage inducible protein (416 aa).

Belongs to the CinA family.

The sequence is that of Putative competence-damage inducible protein from Bacillus subtilis (strain 168).